A 245-amino-acid chain; its full sequence is 6-carboxyhexanoate--CoA ligase (245 aa).

Belongs to the BioW family. In terms of assembly, homodimer. Mg(2+) serves as cofactor.

The enzyme catalyses heptanedioate + ATP + CoA = 6-carboxyhexanoyl-CoA + AMP + diphosphate. The protein operates within metabolic intermediate metabolism; pimeloyl-CoA biosynthesis; pimeloyl-CoA from pimelate: step 1/1. Catalyzes the transformation of pimelate into pimeloyl-CoA with concomitant hydrolysis of ATP to AMP. This Methanococcus vannielii (strain ATCC 35089 / DSM 1224 / JCM 13029 / OCM 148 / SB) protein is 6-carboxyhexanoate--CoA ligase.